The following is a 209-amino-acid chain: uncharacterized protein (209 aa).

Helical transmembrane passes span Ala-10 to Phe-32, Leu-37 to Ile-59, and Phe-64 to Val-86.

It localises to the cell membrane. This is an uncharacterized protein from Aquifex aeolicus (strain VF5).